Consider the following 87-residue polypeptide: Small ribosomal subunit protein bS20 (87 aa).

The disordered stretch occupies residues 1-25; the sequence is MANIKSAKKRAVQSEKRRKHNASRR.

The protein belongs to the bacterial ribosomal protein bS20 family.

Binds directly to 16S ribosomal RNA. The sequence is that of Small ribosomal subunit protein bS20 from Yersinia pseudotuberculosis serotype O:1b (strain IP 31758).